The primary structure comprises 416 residues: Histidine--tRNA ligase (416 aa).

Belongs to the class-II aminoacyl-tRNA synthetase family. In terms of assembly, homodimer.

It localises to the cytoplasm. The catalysed reaction is tRNA(His) + L-histidine + ATP = L-histidyl-tRNA(His) + AMP + diphosphate + H(+). The protein is Histidine--tRNA ligase of Dictyoglomus thermophilum (strain ATCC 35947 / DSM 3960 / H-6-12).